The following is a 418-amino-acid chain: Nuclear hormone receptor 114 (418 aa).

The nuclear receptor DNA-binding region spans 12-87 (DHVCLVCQDF…VGMDRNALQQ (76 aa)). NR C4-type zinc fingers lie at residues 15 to 35 (CLVC…CVGC) and 51 to 70 (CQFE…CRYC). Residues 89–130 (RDPIGYTKRTRRPKKELKTTSDCSSDEGASTPPSVSPLQLSP) are disordered. The NR LBD domain maps to 170-409 (PIRSLHEALC…AFARQLFFGD (240 aa)). An AF-2 region spans residues 398-409 (FSAFARQLFFGD).

The protein belongs to the nuclear hormone receptor family. Expressed in germ and intestinal cells and at low levels in the hypodermis.

Its subcellular location is the nucleus. Its function is as follows. Probable transcription factor which may have a role in detoxifying dietary metabolites arising from bacterial tryptophan metabolism. Required for fertility and involved in proper postembryonic germline development, especially germline stem cell (GSC) proliferation. Required for activation of the methionine/S-adenosylmethionine (Met/SAM) cycle in response to low levels of SAM. The sequence is that of Nuclear hormone receptor 114 from Caenorhabditis elegans.